We begin with the raw amino-acid sequence, 419 residues long: Gamma-glutamyl phosphate reductase (419 aa).

It belongs to the gamma-glutamyl phosphate reductase family.

It is found in the cytoplasm. The catalysed reaction is L-glutamate 5-semialdehyde + phosphate + NADP(+) = L-glutamyl 5-phosphate + NADPH + H(+). It functions in the pathway amino-acid biosynthesis; L-proline biosynthesis; L-glutamate 5-semialdehyde from L-glutamate: step 2/2. Its function is as follows. Catalyzes the NADPH-dependent reduction of L-glutamate 5-phosphate into L-glutamate 5-semialdehyde and phosphate. The product spontaneously undergoes cyclization to form 1-pyrroline-5-carboxylate. In Mannheimia succiniciproducens (strain KCTC 0769BP / MBEL55E), this protein is Gamma-glutamyl phosphate reductase.